The following is a 419-amino-acid chain: L-2-hydroxyglutarate dehydrogenase, mitochondrial (419 aa).

Residues 1 to 51 (MVPALRYLVGACGRARGGFAGDFPGASGLASGRPRPLCGGSRSASTSSFDI) constitute a mitochondrion transit peptide. 2 positions are modified to N6-acetyllysine: Lys104 and Lys173.

Belongs to the L2HGDH family. It depends on FAD as a cofactor.

Its subcellular location is the mitochondrion. The enzyme catalyses (S)-2-hydroxyglutarate + A = 2-oxoglutarate + AH2. This Pongo abelii (Sumatran orangutan) protein is L-2-hydroxyglutarate dehydrogenase, mitochondrial (L2HGDH).